The chain runs to 115 residues: MQKLIEDITKEQLRTDLPAFRPGDTLRVHVKVVEGNRERIQIFEGVVIKRRGGGISETFTVRKISYGVGVERTFPVHTPKIAKIEVVRYGKVRRAKLYYLRELRGKAARIKEIRR.

Belongs to the bacterial ribosomal protein bL19 family. As to quaternary structure, part of the 50S ribosomal subunit.

Functionally, this protein is located at the 30S-50S ribosomal subunit interface and may play a role in the structure and function of the aminoacyl-tRNA binding site. The sequence is that of Large ribosomal subunit protein bL19 (rplS) from Bacillus subtilis (strain 168).